A 642-amino-acid chain; its full sequence is ATP-dependent zinc metalloprotease FtsH (642 aa).

At 1–6 (MGRFTK) the chain is on the cytoplasmic side. The helical transmembrane segment at 7-27 (NIVLYLLIIAAFVIAIDAFSG) threads the bilayer. At 28 to 101 (QSANKSELSY…TAAPPEQPAW (74 aa)) the chain is on the extracellular side. The helical transmembrane segment at 102 to 122 (WMSLLGSAIPIIILVVLFFFI) threads the bilayer. Over 123–642 (MQQTQGGGGR…LSEASSNEIK (520 aa)) the chain is Cytoplasmic. 194 to 201 (GPPGTGKT) contributes to the ATP binding site. H416 serves as a coordination point for Zn(2+). Residue E417 is part of the active site. Zn(2+)-binding residues include H420 and D492. The span at 597-610 (TTKEPEAEEPKVAS) shows a compositional bias: basic and acidic residues. A disordered region spans residues 597-642 (TTKEPEAEEPKVASEADSSIVPEGVDAKKTTSTVADLSEASSNEIK). Over residues 626-642 (TTSTVADLSEASSNEIK) the composition is skewed to polar residues.

This sequence in the central section; belongs to the AAA ATPase family. It in the C-terminal section; belongs to the peptidase M41 family. Homohexamer. It depends on Zn(2+) as a cofactor.

It is found in the cell membrane. Functionally, acts as a processive, ATP-dependent zinc metallopeptidase for both cytoplasmic and membrane proteins. Plays a role in the quality control of integral membrane proteins. The sequence is that of ATP-dependent zinc metalloprotease FtsH from Veillonella parvula (strain ATCC 10790 / DSM 2008 / CCUG 5123 / JCM 12972 / NCTC 11810 / Te3) (Veillonella alcalescens).